Reading from the N-terminus, the 215-residue chain is MNIILLGPPGAGKGTQAKKIAMRYGIPHISTGDMLREAVAAGTELGKKVKEIIEKGLLVPDDLMVAIVEDRLKKPDSAKGFILDGFPRTVQQAESLSGILGNLGKELDAVILIDAPEEVVVERISSRRVCPSCGKVYNLLTIKPKNDMLCDDCNIGLIQREDDKPATVRERYRVYMEKTAPVINYYSEHGSLITIDGSLDIEAVTEEIFKNLENL.

10–15 is a binding site for ATP; sequence GAGKGT. Residues 30-59 form an NMP region; it reads STGDMLREAVAAGTELGKKVKEIIEKGLLV. AMP contacts are provided by residues Thr-31, Arg-36, 57–59, 85–88, and Gln-92; these read LLV and GFPR. Residues 126–163 are LID; the sequence is SRRVCPSCGKVYNLLTIKPKNDMLCDDCNIGLIQREDD. An ATP-binding site is contributed by Arg-127. Cys-130 and Cys-133 together coordinate Zn(2+). 136–137 is a binding site for ATP; it reads VY. Residues Cys-150 and Cys-153 each coordinate Zn(2+). AMP is bound by residues Arg-160 and Arg-171. ATP is bound at residue Leu-199.

The protein belongs to the adenylate kinase family. In terms of assembly, monomer.

It localises to the cytoplasm. It carries out the reaction AMP + ATP = 2 ADP. It participates in purine metabolism; AMP biosynthesis via salvage pathway; AMP from ADP: step 1/1. In terms of biological role, catalyzes the reversible transfer of the terminal phosphate group between ATP and AMP. Plays an important role in cellular energy homeostasis and in adenine nucleotide metabolism. This Kosmotoga olearia (strain ATCC BAA-1733 / DSM 21960 / TBF 19.5.1) protein is Adenylate kinase.